The sequence spans 301 residues: Ribosomal large subunit pseudouridine synthase C (301 aa).

The region spanning 11-70 (SRLDKYLRRLYPLLTQGVIEKALRQKQIIVNSKKAEASLRVVEGDEIFIHDKFNLPIAQP) is the S4 RNA-binding domain. The active site involves Asp140.

Belongs to the pseudouridine synthase RluA family.

It catalyses the reaction uridine(955/2504/2580) in 23S rRNA = pseudouridine(955/2504/2580) in 23S rRNA. Responsible for synthesis of pseudouridine from uracil at positions 955, 2504 and 2580 in 23S ribosomal RNA. In Rickettsia bellii (strain RML369-C), this protein is Ribosomal large subunit pseudouridine synthase C (rluC).